The primary structure comprises 226 residues: Leucyl/phenylalanyl-tRNA--protein transferase (226 aa).

Belongs to the L/F-transferase family.

The protein resides in the cytoplasm. It carries out the reaction N-terminal L-lysyl-[protein] + L-leucyl-tRNA(Leu) = N-terminal L-leucyl-L-lysyl-[protein] + tRNA(Leu) + H(+). It catalyses the reaction N-terminal L-arginyl-[protein] + L-leucyl-tRNA(Leu) = N-terminal L-leucyl-L-arginyl-[protein] + tRNA(Leu) + H(+). The catalysed reaction is L-phenylalanyl-tRNA(Phe) + an N-terminal L-alpha-aminoacyl-[protein] = an N-terminal L-phenylalanyl-L-alpha-aminoacyl-[protein] + tRNA(Phe). Functions in the N-end rule pathway of protein degradation where it conjugates Leu, Phe and, less efficiently, Met from aminoacyl-tRNAs to the N-termini of proteins containing an N-terminal arginine or lysine. This chain is Leucyl/phenylalanyl-tRNA--protein transferase, found in Pseudomonas putida (strain ATCC 47054 / DSM 6125 / CFBP 8728 / NCIMB 11950 / KT2440).